Consider the following 156-residue polypeptide: Small ribosomal subunit protein uS7 (156 aa).

This sequence belongs to the universal ribosomal protein uS7 family. In terms of assembly, part of the 30S ribosomal subunit. Contacts proteins S9 and S11.

In terms of biological role, one of the primary rRNA binding proteins, it binds directly to 16S rRNA where it nucleates assembly of the head domain of the 30S subunit. Is located at the subunit interface close to the decoding center, probably blocks exit of the E-site tRNA. The chain is Small ribosomal subunit protein uS7 from Beijerinckia indica subsp. indica (strain ATCC 9039 / DSM 1715 / NCIMB 8712).